Here is a 400-residue protein sequence, read N- to C-terminus: Multidrug resistance protein MdtH (400 aa).

At 1–12 (MSRVSQARNLGK) the chain is on the cytoplasmic side. A helical membrane pass occupies residues 13–33 (YFLLIDNMLVVLGFFVVFPLI). The Periplasmic segment spans residues 34 to 98 (SIRFVDQMGW…GFATMGIAHE (65 aa)). The chain crosses the membrane as a helical span at residues 99-116 (PWLLWFSCLLSGLGGTLF). Residues 117–138 (DPPRSALVVKLIRPQQRGRFFS) are Cytoplasmic-facing. Residues 139 to 159 (LLMMQDSAGAVIGALLGSWLL) form a helical membrane-spanning segment. At 160–164 (QYDFR) the chain is on the periplasmic side. The chain crosses the membrane as a helical span at residues 165–185 (LVCATGAVLFVLCAAFNAWLL). Topologically, residues 186 to 213 (PAWKLSTVRTPVREGMTRVMRDKRFVTY) are cytoplasmic. The chain crosses the membrane as a helical span at residues 214–232 (VLTLAGYYMLAVQVMLPIM). The Periplasmic portion of the chain corresponds to 233-241 (VNDVAGAPS). Residues 242–262 (AVKWMYAIEACLSLTLLYPIA) form a helical membrane-spanning segment. Residues 263 to 274 (RWSEKHFRLEHR) are Cytoplasmic-facing. Residues 275–295 (LMAGLLIMSLSMMPVGMVSGL) form a helical membrane-spanning segment. The Periplasmic portion of the chain corresponds to 296 to 297 (QQ). The chain crosses the membrane as a helical span at residues 298 to 318 (LFTLICLFYIGSIIAEPARET). The Cytoplasmic segment spans residues 319–337 (LSASLADARARGSYMGFSR). A helical transmembrane segment spans residues 338–358 (LGLAIGGAIGYIGGGWLFDLG). The Periplasmic segment spans residues 359–365 (KSAHQPE). Residues 366-386 (LPWMMLGIIGIFTFLALGWQF) traverse the membrane as a helical segment. At 387 to 400 (SQKRAARRLLERDA) the chain is on the cytoplasmic side.

Belongs to the major facilitator superfamily. DHA1 family. MdtH (TC 2.A.1.2.21) subfamily.

The protein resides in the cell inner membrane. The polypeptide is Multidrug resistance protein MdtH (Shigella boydii serotype 4 (strain Sb227)).